A 608-amino-acid polypeptide reads, in one-letter code: Glutamine--fructose-6-phosphate aminotransferase [isomerizing] (608 aa).

Cysteine 2 functions as the Nucleophile; for GATase activity in the catalytic mechanism. The Glutamine amidotransferase type-2 domain maps to 2–217; the sequence is CGIVGYIGKK…DNEFVLMTKD (216 aa). SIS domains are found at residues 284–424 and 453–598; these read ISKE…EKGT and IMKK…VDKP. The For Fru-6P isomerization activity role is filled by lysine 603.

As to quaternary structure, homodimer.

It is found in the cytoplasm. The catalysed reaction is D-fructose 6-phosphate + L-glutamine = D-glucosamine 6-phosphate + L-glutamate. Its function is as follows. Catalyzes the first step in hexosamine metabolism, converting fructose-6P into glucosamine-6P using glutamine as a nitrogen source. In Clostridium tetani (strain Massachusetts / E88), this protein is Glutamine--fructose-6-phosphate aminotransferase [isomerizing].